A 259-amino-acid polypeptide reads, in one-letter code: uncharacterized protein (259 aa).

This sequence to M.thermoautotrophicum MTH738.

This is an uncharacterized protein from Methanocaldococcus jannaschii (strain ATCC 43067 / DSM 2661 / JAL-1 / JCM 10045 / NBRC 100440) (Methanococcus jannaschii).